The sequence spans 315 residues: Aspartate carbamoyltransferase catalytic subunit (315 aa).

Carbamoyl phosphate is bound by residues R65 and T66. K93 lines the L-aspartate pocket. Carbamoyl phosphate contacts are provided by R115, H145, and Q148. Positions 179 and 234 each coordinate L-aspartate. Residues G275 and P276 each coordinate carbamoyl phosphate.

It belongs to the aspartate/ornithine carbamoyltransferase superfamily. ATCase family. In terms of assembly, heterododecamer (2C3:3R2) of six catalytic PyrB chains organized as two trimers (C3), and six regulatory PyrI chains organized as three dimers (R2).

The catalysed reaction is carbamoyl phosphate + L-aspartate = N-carbamoyl-L-aspartate + phosphate + H(+). The protein operates within pyrimidine metabolism; UMP biosynthesis via de novo pathway; (S)-dihydroorotate from bicarbonate: step 2/3. Functionally, catalyzes the condensation of carbamoyl phosphate and aspartate to form carbamoyl aspartate and inorganic phosphate, the committed step in the de novo pyrimidine nucleotide biosynthesis pathway. The polypeptide is Aspartate carbamoyltransferase catalytic subunit (Xanthomonas axonopodis pv. citri (strain 306)).